The primary structure comprises 125 residues: MFATFGFIALFAVLGAWARYGQTLLVQAAFGRGFPWATLSINVLGCFLMGFLFFETLERISVSPELRTGMLTGGLGAYTTFSTFSLETLVLFENGEAVKGLLYMFTSLFLCVGAAFAGAWISHST.

Helical transmembrane passes span 1–21 (MFAT…ARYG), 34–54 (FPWA…FLFF), 72–92 (TGGL…LVLF), and 101–121 (LLYM…GAWI). Gly-76 and Thr-79 together coordinate Na(+).

This sequence belongs to the fluoride channel Fluc/FEX (TC 1.A.43) family.

Its subcellular location is the cell inner membrane. The enzyme catalyses fluoride(in) = fluoride(out). Its activity is regulated as follows. Na(+) is not transported, but it plays an essential structural role and its presence is essential for fluoride channel function. In terms of biological role, fluoride-specific ion channel. Important for reducing fluoride concentration in the cell, thus reducing its toxicity. The sequence is that of Fluoride-specific ion channel FluC from Acidithiobacillus ferrooxidans (strain ATCC 23270 / DSM 14882 / CIP 104768 / NCIMB 8455) (Ferrobacillus ferrooxidans (strain ATCC 23270)).